Here is a 322-residue protein sequence, read N- to C-terminus: uncharacterized protein (322 aa).

This sequence belongs to the glycosyltransferase 2 family.

This is an uncharacterized protein from Nostoc sp. (strain PCC 7120 / SAG 25.82 / UTEX 2576).